Reading from the N-terminus, the 1485-residue chain is Formin BNR1 (1485 aa).

Disordered regions lie at residues 65-88, 226-248, and 549-575; these read HLPP…PTLH, HDDS…PTET, and ANTS…SFDE. Residues 110-636 enclose the GBD/FH3 domain; that stretch reads NQIPPEEIVD…HVTNESRVIG (527 aa). A compositionally biased stretch (polar residues) spans 231–248; that stretch reads TSKLSIESGGSSGAPTET. The segment covering 553–564 has biased composition (acidic residues); sequence LEEDELTPELED. Residues 660-734 adopt a coiled-coil conformation; sequence ARRAVAESKM…EQLQSPNNTA (75 aa). The tract at residues 746–874 is disordered; the sequence is GNGTVASLKD…GFMNASAPPP (129 aa). The 416-residue stretch at 953 to 1368 folds into the FH2 domain; it reads VVPSIRPKNK…YEIRKKILED (416 aa). Coiled-coil stretches lie at residues 1240–1312 and 1351–1382; these read HNIS…GELN and QREE…ESAE. Residues 1447–1471 are disordered; that stretch reads LKRRMTTRKRTTDGETSPKSEQFMS.

The protein belongs to the formin homology family. BNI1 subfamily. As to quaternary structure, interacts with IQG1.

It is found in the bud neck. It localises to the cell septum. Its function is as follows. May organize microtubules by mediating spindle positioning and movement in the budding process. Required for cytokinesis and the maintenance of polarized hyphal growth. This Candida albicans (strain SC5314 / ATCC MYA-2876) (Yeast) protein is Formin BNR1 (BNR1).